The sequence spans 403 residues: Phosphoglycerate kinase (403 aa).

Substrate contacts are provided by residues 21 to 23 (DFN), arginine 36, 59 to 62 (HLGR), arginine 119, and arginine 154. ATP is bound by residues lysine 207, glycine 299, glutamate 330, and 357–360 (GGDA).

The protein belongs to the phosphoglycerate kinase family. Monomer.

It is found in the cytoplasm. It catalyses the reaction (2R)-3-phosphoglycerate + ATP = (2R)-3-phospho-glyceroyl phosphate + ADP. Its pathway is carbohydrate degradation; glycolysis; pyruvate from D-glyceraldehyde 3-phosphate: step 2/5. The polypeptide is Phosphoglycerate kinase (Chlamydia caviae (strain ATCC VR-813 / DSM 19441 / 03DC25 / GPIC) (Chlamydophila caviae)).